We begin with the raw amino-acid sequence, 475 residues long: Adenylyl cyclase-associated protein 1 (475 aa).

Ala-2 is subject to N-acetylalanine. Tyr-31 is modified (phosphotyrosine). Ser-34 carries the phosphoserine modification. Residue Lys-81 is modified to N6-acetyllysine. 2 disordered regions span residues 216-237 and 278-319; these read ELSGLPSGPSAGSCPPPPPPCP and MKTH…KKEP. A compositionally biased stretch (low complexity) spans 218–228; that stretch reads SGLPSGPSAGS. Lys-287 carries the N6-methyllysine modification. Residues Ser-290, Ser-295, and Ser-301 each carry the phosphoserine modification. Thr-307 is modified (phosphothreonine). Ser-308 and Ser-310 each carry phosphoserine. A C-CAP/cofactor C-like domain is found at 319-453; sequence PAVLELEGKK…EGGDFNEFPV (135 aa). Lys-348 is covalently cross-linked (Glycyl lysine isopeptide (Lys-Gly) (interchain with G-Cter in SUMO1)).

It belongs to the CAP family. In terms of assembly, homodimer. Binds actin monomers.

It localises to the cell membrane. Directly regulates filament dynamics and has been implicated in a number of complex developmental and morphological processes, including mRNA localization and the establishment of cell polarity. This is Adenylyl cyclase-associated protein 1 (CAP1) from Homo sapiens (Human).